The chain runs to 107 residues: Replication initiation control protein YabA (107 aa).

H81, C83, C97, and C100 together coordinate Zn(2+).

Belongs to the YabA family. As to quaternary structure, homotetramer. Interacts with both DnaA and DnaN, acting as a bridge between these two proteins. Zn(2+) is required as a cofactor.

The protein resides in the cytoplasm. Its subcellular location is the nucleoid. Its function is as follows. Involved in control of chromosome replication initiation. Inhibits the cooperative binding of DnaA to the oriC region, thus negatively regulating initiation of chromosome replication. Inhibits the ability of DnaA-ATP to form a helix on DNA; does not disassemble preformed DnaA-DNA helices. Decreases the residence time of DnaA on the chromosome at its binding sites (oriC, replication forks and promoter-binding sites). Tethers DnaA to the replication machinery via the DNA polymerase beta sliding clamp subunit (dnaN). Associates with oriC and other DnaA targets on the chromosome in a DnaA-dependent manner. This is Replication initiation control protein YabA from Streptococcus pyogenes serotype M18 (strain MGAS8232).